The chain runs to 292 residues: MDKVKIALQYMLPKHLLSRLVGKLAAAEAGALTTAAIKWFIKQYKIDMSEAAQSEPEAYKSFNAFFTRALKPGIRPLDMDADIMVHPVDGAVSQLGPIKNGRIFQAKGHHYSSLTLLGDQAEDAKRFEGGDFATIYLAPKDYHRIHMPIKGTLSKMTYVPGELFSVNPLTARNVPGLFARNERVVAIFETELGPLAMVLVGATIVASIETVWAGTVTPPTGKQVFTWEYPTQGPDAITLDKGEEMGRFKLGSTVVMLFAKDAIATFAEGVEAEAVTRMGQAFANLKDVKQAD.

Residues D89, H146, and S252 each act as charge relay system; for autoendoproteolytic cleavage activity in the active site. S252 (schiff-base intermediate with substrate; via pyruvic acid; for decarboxylase activity) is an active-site residue. S252 bears the Pyruvic acid (Ser); by autocatalysis mark.

It belongs to the phosphatidylserine decarboxylase family. PSD-B subfamily. Prokaryotic type I sub-subfamily. As to quaternary structure, heterodimer of a large membrane-associated beta subunit and a small pyruvoyl-containing alpha subunit. It depends on pyruvate as a cofactor. Post-translationally, is synthesized initially as an inactive proenzyme. Formation of the active enzyme involves a self-maturation process in which the active site pyruvoyl group is generated from an internal serine residue via an autocatalytic post-translational modification. Two non-identical subunits are generated from the proenzyme in this reaction, and the pyruvate is formed at the N-terminus of the alpha chain, which is derived from the carboxyl end of the proenzyme. The autoendoproteolytic cleavage occurs by a canonical serine protease mechanism, in which the side chain hydroxyl group of the serine supplies its oxygen atom to form the C-terminus of the beta chain, while the remainder of the serine residue undergoes an oxidative deamination to produce ammonia and the pyruvoyl prosthetic group on the alpha chain. During this reaction, the Ser that is part of the protease active site of the proenzyme becomes the pyruvoyl prosthetic group, which constitutes an essential element of the active site of the mature decarboxylase.

It localises to the cell membrane. It carries out the reaction a 1,2-diacyl-sn-glycero-3-phospho-L-serine + H(+) = a 1,2-diacyl-sn-glycero-3-phosphoethanolamine + CO2. It functions in the pathway phospholipid metabolism; phosphatidylethanolamine biosynthesis; phosphatidylethanolamine from CDP-diacylglycerol: step 2/2. Catalyzes the formation of phosphatidylethanolamine (PtdEtn) from phosphatidylserine (PtdSer). This Shewanella baltica (strain OS223) protein is Phosphatidylserine decarboxylase proenzyme.